Reading from the N-terminus, the 431-residue chain is Adenylosuccinate synthetase (431 aa).

Residues 12-18 and 40-42 each bind GTP; these read GDEGKGK and GHT. Aspartate 13 acts as the Proton acceptor in catalysis. Aspartate 13 and glycine 40 together coordinate Mg(2+). Residues 13–16, 38–41, threonine 131, arginine 145, glutamine 225, threonine 240, and arginine 304 each bind IMP; these read DEGK and NAGH. Histidine 41 functions as the Proton donor in the catalytic mechanism. Residue 300–306 participates in substrate binding; the sequence is TTTGRKR. Residues arginine 306, 332 to 334, and 414 to 416 each bind GTP; these read KLD and STS.

This sequence belongs to the adenylosuccinate synthetase family. In terms of assembly, homodimer. The cofactor is Mg(2+).

The protein resides in the cytoplasm. It carries out the reaction IMP + L-aspartate + GTP = N(6)-(1,2-dicarboxyethyl)-AMP + GDP + phosphate + 2 H(+). It functions in the pathway purine metabolism; AMP biosynthesis via de novo pathway; AMP from IMP: step 1/2. Functionally, plays an important role in the de novo pathway of purine nucleotide biosynthesis. Catalyzes the first committed step in the biosynthesis of AMP from IMP. The sequence is that of Adenylosuccinate synthetase from Jannaschia sp. (strain CCS1).